Consider the following 419-residue polypeptide: O-methyltransferase gsfB (419 aa).

S-adenosyl-L-methionine contacts are provided by residues 255-256 (GG), Asp278, 300-301 (DF), and Arg316. The Proton acceptor role is filled by His320.

This sequence belongs to the class I-like SAM-binding methyltransferase superfamily. Cation-independent O-methyltransferase family.

It carries out the reaction 2-(2,4-dihydroxy-6-oxidobenzoyl)-5-hydroxy-3-methylbenzenolate + S-adenosyl-L-methionine = griseophenone D + S-adenosyl-L-homocysteine + H(+). It functions in the pathway secondary metabolite biosynthesis; terpenoid biosynthesis. Functionally, O-methyltransferase; part of the gene cluster that mediates the biosynthesis of griseofulvin, an important antifungal drug that has been in use for a long time for treating dermatophyte infections. The first step of the pathway is the formation of the heptaketide backbone by gsfA which is initiated by priming with acetyl-CoA, followed by sequential condensations of 6 malonyl-CoA units. The resulting benzophenone can undergo a spontaneous dehydration to form norlichexanthone. However, the true precursor for the griseofulvin biosynthesis is not norlichexanthone, but the heptaketide benzophenone that is O-methylated at 3-OH by gsfB to produce griseophenone D which is further methylated at 9-OH by gsfC to yield griseophenone C. Griseophenone C is then substrate of halogenase gsfI which is responsible for the regio-specific chlorination at the C13 position to form griseophenone B. The cytochrome P450 gsfF catalyzes the coupling of orcinol and phloroglucinol rings in griseophenone B to form desmethyl-dehydrogriseofulvin A which is further methylated at 5-OH by gsfD to yield dehydrogriseofulvin. Finally, gsfE performs stereospecific reduction of enone 18 of dehydrogriseofulvin to afford the final product griseofulvin. In Penicillium aethiopicum, this protein is O-methyltransferase gsfB.